Here is a 427-residue protein sequence, read N- to C-terminus: Adenylosuccinate synthetase (427 aa).

GTP contacts are provided by residues 12–18 (GDEGKGK) and 40–42 (GHT). D13 (proton acceptor) is an active-site residue. D13 and G40 together coordinate Mg(2+). Residues 13–16 (DEGK), 38–41 (NAGH), T130, R144, Q224, T239, and R303 contribute to the IMP site. H41 functions as the Proton donor in the catalytic mechanism. Position 299-305 (299-305 (VTTGRAR)) interacts with substrate. Residues R305, 331 to 333 (KID), and 413 to 415 (SVG) contribute to the GTP site.

The protein belongs to the adenylosuccinate synthetase family. Homodimer. Mg(2+) is required as a cofactor.

It is found in the cytoplasm. It catalyses the reaction IMP + L-aspartate + GTP = N(6)-(1,2-dicarboxyethyl)-AMP + GDP + phosphate + 2 H(+). It functions in the pathway purine metabolism; AMP biosynthesis via de novo pathway; AMP from IMP: step 1/2. Plays an important role in the de novo pathway of purine nucleotide biosynthesis. Catalyzes the first committed step in the biosynthesis of AMP from IMP. The sequence is that of Adenylosuccinate synthetase from Clostridium novyi (strain NT).